The following is a 141-amino-acid chain: Putative pre-16S rRNA nuclease (141 aa).

This sequence belongs to the YqgF nuclease family.

The protein localises to the cytoplasm. Functionally, could be a nuclease involved in processing of the 5'-end of pre-16S rRNA. The polypeptide is Putative pre-16S rRNA nuclease (Natranaerobius thermophilus (strain ATCC BAA-1301 / DSM 18059 / JW/NM-WN-LF)).